We begin with the raw amino-acid sequence, 211 residues long: Protein-L-isoaspartate O-methyltransferase (211 aa).

Residue Ser60 is part of the active site.

The protein belongs to the methyltransferase superfamily. L-isoaspartyl/D-aspartyl protein methyltransferase family.

It is found in the cytoplasm. It catalyses the reaction [protein]-L-isoaspartate + S-adenosyl-L-methionine = [protein]-L-isoaspartate alpha-methyl ester + S-adenosyl-L-homocysteine. Catalyzes the methyl esterification of L-isoaspartyl residues in peptides and proteins that result from spontaneous decomposition of normal L-aspartyl and L-asparaginyl residues. It plays a role in the repair and/or degradation of damaged proteins. The sequence is that of Protein-L-isoaspartate O-methyltransferase from Pseudomonas aeruginosa (strain LESB58).